A 27-amino-acid chain; its full sequence is uncharacterized protein (27 aa).

The protein localises to the plastid. The protein resides in the cyanelle. This is an uncharacterized protein from Cyanophora paradoxa.